Consider the following 274-residue polypeptide: Orotidine 5'-phosphate decarboxylase (274 aa).

Residue Lys-95 is the Proton donor of the active site.

Belongs to the OMP decarboxylase family. Type 2 subfamily.

It catalyses the reaction orotidine 5'-phosphate + H(+) = UMP + CO2. The protein operates within pyrimidine metabolism; UMP biosynthesis via de novo pathway; UMP from orotate: step 2/2. The sequence is that of Orotidine 5'-phosphate decarboxylase from Mycobacterium avium (strain 104).